We begin with the raw amino-acid sequence, 724 residues long: Hyaluronan mediated motility receptor (724 aa).

Disordered regions lie at residues methionine 1–glycine 22 and lysine 40–aspartate 81. A Phosphoserine modification is found at serine 20. 2 stretches are compositionally biased toward basic and acidic residues: residues glutamine 46–threonine 60 and lysine 70–aspartate 81. Asparagine 133, asparagine 477, asparagine 567, and asparagine 588 each carry an N-linked (GlcNAc...) asparagine glycan. A required for interaction with FAM83D region spans residues glutamate 365–glutamine 546. Hyaluronic acid-binding regions lie at residues lysine 635–lysine 645 and lysine 657–lysine 666. Threonine 703 carries the phosphothreonine modification.

In terms of assembly, interacts with ANKRD26. Interacts with DYNLL1. Interacts with FAM83D/CHICA. In terms of tissue distribution, expressed in testis. Expressed in the breast.

The protein localises to the cell surface. The protein resides in the cytoplasm. It localises to the cytoskeleton. It is found in the spindle. In terms of biological role, receptor for hyaluronic acid (HA). Involved in cell motility. When hyaluronan binds to HMMR, the phosphorylation of a number of proteins, including PTK2/FAK1 occurs. May also be involved in cellular transformation and metastasis formation, and in regulating extracellular-regulated kinase (ERK) activity. May act as a regulator of adipogenisis. The chain is Hyaluronan mediated motility receptor (HMMR) from Homo sapiens (Human).